A 128-amino-acid polypeptide reads, in one-letter code: Mu-like prophage FluMu protein gp35 (128 aa).

The interval 53–87 is disordered; it reads TETGSQEGGEGLSKEPAGSDEQKQLRADPPSTDLN.

It to phage Mu protein gp35. In terms of assembly, monomer.

The sequence is that of Mu-like prophage FluMu protein gp35 from Haemophilus influenzae (strain ATCC 51907 / DSM 11121 / KW20 / Rd).